Consider the following 754-residue polypeptide: 5-methyltetrahydropteroyltriglutamate--homocysteine methyltransferase (754 aa).

5-methyltetrahydropteroyltri-L-glutamate-binding positions include 17–20 (RELK) and Lys-117. L-homocysteine is bound by residues 431-433 (IGS) and Glu-484. Residues 431–433 (IGS) and Glu-484 contribute to the L-methionine site. 5-methyltetrahydropteroyltri-L-glutamate is bound by residues 515-516 (RC) and Trp-561. An L-homocysteine-binding site is contributed by Asp-599. Asp-599 contacts L-methionine. Residue Glu-605 participates in 5-methyltetrahydropteroyltri-L-glutamate binding. Residues His-641, Cys-643, and Glu-665 each coordinate Zn(2+). Catalysis depends on His-694, which acts as the Proton donor. A Zn(2+)-binding site is contributed by Cys-726.

Belongs to the vitamin-B12 independent methionine synthase family. Zn(2+) serves as cofactor.

It catalyses the reaction 5-methyltetrahydropteroyltri-L-glutamate + L-homocysteine = tetrahydropteroyltri-L-glutamate + L-methionine. Its pathway is amino-acid biosynthesis; L-methionine biosynthesis via de novo pathway; L-methionine from L-homocysteine (MetE route): step 1/1. Functionally, catalyzes the transfer of a methyl group from 5-methyltetrahydrofolate to homocysteine resulting in methionine formation. This is 5-methyltetrahydropteroyltriglutamate--homocysteine methyltransferase from Salmonella agona (strain SL483).